A 118-amino-acid chain; its full sequence is D-dopachrome decarboxylase (118 aa).

P2 is subject to N-acetylproline. K33 bears the N6-acetyllysine mark.

Belongs to the MIF family. Homotrimer. In terms of tissue distribution, highly expressed in the liver and at lower levels in the heart, lung and pancreas.

It localises to the cytoplasm. The catalysed reaction is D-dopachrome + H(+) = 5,6-dihydroxyindole + CO2. Tautomerization of D-dopachrome with decarboxylation to give 5,6-dihydroxyindole (DHI). This Homo sapiens (Human) protein is D-dopachrome decarboxylase (DDT).